Reading from the N-terminus, the 156-residue chain is 6,7-dimethyl-8-ribityllumazine synthase (156 aa).

5-amino-6-(D-ribitylamino)uracil contacts are provided by residues phenylalanine 23, 57-59, and 81-83; these read AYE and AII. (2S)-2-hydroxy-3-oxobutyl phosphate is bound at residue 86 to 87; it reads GT. Histidine 89 (proton donor) is an active-site residue. A 5-amino-6-(D-ribitylamino)uracil-binding site is contributed by phenylalanine 114. Arginine 128 is a binding site for (2S)-2-hydroxy-3-oxobutyl phosphate.

Belongs to the DMRL synthase family.

It carries out the reaction (2S)-2-hydroxy-3-oxobutyl phosphate + 5-amino-6-(D-ribitylamino)uracil = 6,7-dimethyl-8-(1-D-ribityl)lumazine + phosphate + 2 H2O + H(+). Its pathway is cofactor biosynthesis; riboflavin biosynthesis; riboflavin from 2-hydroxy-3-oxobutyl phosphate and 5-amino-6-(D-ribitylamino)uracil: step 1/2. Its function is as follows. Catalyzes the formation of 6,7-dimethyl-8-ribityllumazine by condensation of 5-amino-6-(D-ribitylamino)uracil with 3,4-dihydroxy-2-butanone 4-phosphate. This is the penultimate step in the biosynthesis of riboflavin. In Helicobacter pylori (strain HPAG1), this protein is 6,7-dimethyl-8-ribityllumazine synthase.